A 201-amino-acid chain; its full sequence is Holliday junction branch migration complex subunit RuvA (201 aa).

The domain I stretch occupies residues 1 to 64 (MIGRLYGKII…EDAHLLFGFA (64 aa)). Residues 65–143 (QKQDRTLFRE…GIAQTDFFVE (79 aa)) are domain II. Residues 144–154 (HSHETMVATYE) form a flexible linker region. Residues 154–201 (EIDASEEARDALLALGYKLTDAEKMIKKVHKSGATSEQLIRDALKASL) are domain III.

The protein belongs to the RuvA family. As to quaternary structure, homotetramer. Forms an RuvA(8)-RuvB(12)-Holliday junction (HJ) complex. HJ DNA is sandwiched between 2 RuvA tetramers; dsDNA enters through RuvA and exits via RuvB. An RuvB hexamer assembles on each DNA strand where it exits the tetramer. Each RuvB hexamer is contacted by two RuvA subunits (via domain III) on 2 adjacent RuvB subunits; this complex drives branch migration. In the full resolvosome a probable DNA-RuvA(4)-RuvB(12)-RuvC(2) complex forms which resolves the HJ.

The protein localises to the cytoplasm. Functionally, the RuvA-RuvB-RuvC complex processes Holliday junction (HJ) DNA during genetic recombination and DNA repair, while the RuvA-RuvB complex plays an important role in the rescue of blocked DNA replication forks via replication fork reversal (RFR). RuvA specifically binds to HJ cruciform DNA, conferring on it an open structure. The RuvB hexamer acts as an ATP-dependent pump, pulling dsDNA into and through the RuvAB complex. HJ branch migration allows RuvC to scan DNA until it finds its consensus sequence, where it cleaves and resolves the cruciform DNA. The chain is Holliday junction branch migration complex subunit RuvA from Haemophilus ducreyi (strain 35000HP / ATCC 700724).